We begin with the raw amino-acid sequence, 862 residues long: Genome polyprotein (862 aa).

Residue glycine 2 is the site of N-myristoyl glycine; by host attachment.

The protein belongs to the picornaviruses polyprotein family. Interacts with capsid protein VP1 and capsid protein VP3 to form heterotrimeric protomers. In terms of assembly, interacts with capsid protein VP0, and capsid protein VP3 to form heterotrimeric protomers. Five protomers subsequently associate to form pentamers which serve as building blocks for the capsid. Interacts with capsid protein VP2, capsid protein VP3 and capsid protein VP4 following cleavage of capsid protein VP0. As to quaternary structure, interacts with capsid protein VP1 and capsid protein VP3 in the mature capsid. Interacts with capsid protein VP0 and capsid protein VP1 to form heterotrimeric protomers. Five protomers subsequently associate to form pentamers which serve as building blocks for the capsid. Interacts with capsid protein VP4 in the mature capsid. Interacts with protein 2C; this interaction may be important for virion morphogenesis. In terms of assembly, interacts with capsid protein VP1 and capsid protein VP3. In terms of processing, specific enzymatic cleavages in vivo by the viral proteases yield processing intermediates and the mature proteins. Myristoylation is required for the formation of pentamers during virus assembly. Further assembly of 12 pentamers and a molecule of genomic RNA generates the provirion. Post-translationally, during virion maturation, immature virions are rendered infectious following cleavage of VP0 into VP4 and VP2. This maturation seems to be an autocatalytic event triggered by the presence of RNA in the capsid and it is followed by a conformational change infectious virion. In terms of processing, myristoylation is required during RNA encapsidation and formation of the mature virus particle.

The protein localises to the virion. The protein resides in the host cytoplasm. In terms of biological role, forms an icosahedral capsid of pseudo T=3 symmetry with capsid proteins VP2 and VP3. The capsid is 300 Angstroms in diameter, composed of 60 copies of each capsid protein and enclosing the viral positive strand RNA genome. Capsid protein VP1 mainly forms the vertices of the capsid. Capsid protein VP1 interacts with host cell receptor to provide virion attachment to target host cells. This attachment induces virion internalization. Tyrosine kinases are probably involved in the entry process. After binding to its receptor, the capsid undergoes conformational changes. Capsid protein VP1 N-terminus (that contains an amphipathic alpha-helix) and capsid protein VP4 are externalized. Together, they shape a pore in the host membrane through which viral genome is translocated to host cell cytoplasm. Functionally, forms an icosahedral capsid of pseudo T=3 symmetry with capsid proteins VP2 and VP3. The capsid is 300 Angstroms in diameter, composed of 60 copies of each capsid protein and enclosing the viral positive strand RNA genome. Its function is as follows. Lies on the inner surface of the capsid shell. After binding to the host receptor, the capsid undergoes conformational changes. Capsid protein VP4 is released, Capsid protein VP1 N-terminus is externalized, and together, they shape a pore in the host membrane through which the viral genome is translocated into the host cell cytoplasm. Component of immature procapsids, which is cleaved into capsid proteins VP4 and VP2 after maturation. Allows the capsid to remain inactive before the maturation step. This chain is Genome polyprotein, found in Echovirus 16 (strain Harrington).